We begin with the raw amino-acid sequence, 72 residues long: Translation initiation factor IF-1 (72 aa).

Residues 1–72 (MAKEEAIEVE…TRGRIIFRER (72 aa)) enclose the S1-like domain.

This sequence belongs to the IF-1 family. Component of the 30S ribosomal translation pre-initiation complex which assembles on the 30S ribosome in the order IF-2 and IF-3, IF-1 and N-formylmethionyl-tRNA(fMet); mRNA recruitment can occur at any time during PIC assembly.

The protein localises to the cytoplasm. Functionally, one of the essential components for the initiation of protein synthesis. Stabilizes the binding of IF-2 and IF-3 on the 30S subunit to which N-formylmethionyl-tRNA(fMet) subsequently binds. Helps modulate mRNA selection, yielding the 30S pre-initiation complex (PIC). Upon addition of the 50S ribosomal subunit IF-1, IF-2 and IF-3 are released leaving the mature 70S translation initiation complex. The polypeptide is Translation initiation factor IF-1 (Treponema denticola (strain ATCC 35405 / DSM 14222 / CIP 103919 / JCM 8153 / KCTC 15104)).